The chain runs to 104 residues: Large ribosomal subunit protein bL21 (104 aa).

The protein belongs to the bacterial ribosomal protein bL21 family. In terms of assembly, part of the 50S ribosomal subunit. Contacts protein L20.

Functionally, this protein binds to 23S rRNA in the presence of protein L20. The protein is Large ribosomal subunit protein bL21 of Streptococcus equi subsp. equi (strain 4047).